The following is a 310-amino-acid chain: Oxygen-dependent coproporphyrinogen-III oxidase (310 aa).

Position 92 (serine 92) interacts with substrate. A divalent metal cation-binding residues include histidine 96 and histidine 106. The Proton donor role is filled by histidine 106. A substrate-binding site is contributed by 108–110 (NVR). The a divalent metal cation site is built by histidine 145 and histidine 175. Residues 240–275 (YVEFNLIWDRGTLFGLQSGGRTESILMSMPPLARWE) form an important for dimerization region. Residue 258–260 (GGR) coordinates substrate.

It belongs to the aerobic coproporphyrinogen-III oxidase family. As to quaternary structure, homodimer. The cofactor is a divalent metal cation.

It localises to the cytoplasm. It carries out the reaction coproporphyrinogen III + O2 + 2 H(+) = protoporphyrinogen IX + 2 CO2 + 2 H2O. The protein operates within porphyrin-containing compound metabolism; protoporphyrin-IX biosynthesis; protoporphyrinogen-IX from coproporphyrinogen-III (O2 route): step 1/1. Its function is as follows. Involved in the heme biosynthesis. Catalyzes the aerobic oxidative decarboxylation of propionate groups of rings A and B of coproporphyrinogen-III to yield the vinyl groups in protoporphyrinogen-IX. The protein is Oxygen-dependent coproporphyrinogen-III oxidase of Pectobacterium carotovorum subsp. carotovorum (strain PC1).